An 86-amino-acid chain; its full sequence is Large ribosomal subunit protein uL23 (86 aa).

The protein belongs to the universal ribosomal protein uL23 family. In terms of assembly, part of the 50S ribosomal subunit. Contacts protein L29.

Functionally, binds to 23S rRNA. One of the proteins that surrounds the polypeptide exit tunnel on the outside of the ribosome. The chain is Large ribosomal subunit protein uL23 from Pyrococcus horikoshii (strain ATCC 700860 / DSM 12428 / JCM 9974 / NBRC 100139 / OT-3).